A 361-amino-acid chain; its full sequence is S-adenosylmethionine decarboxylase proenzyme (361 aa).

Residues glutamate 11 and glutamate 14 contribute to the active site. Serine 71 serves as the catalytic Schiff-base intermediate with substrate; via pyruvic acid. Position 71 is a pyruvic acid (Ser); by autocatalysis (serine 71). The active-site Proton donor; for catalytic activity is the cysteine 85. Residues serine 234 and histidine 247 each act as proton acceptor; for processing activity in the active site.

This sequence belongs to the eukaryotic AdoMetDC family. Pyruvate is required as a cofactor. Post-translationally, is synthesized initially as an inactive proenzyme. Formation of the active enzyme involves a self-maturation process in which the active site pyruvoyl group is generated from an internal serine residue via an autocatalytic post-translational modification. Two non-identical subunits are generated from the proenzyme in this reaction, and the pyruvate is formed at the N-terminus of the alpha chain, which is derived from the carboxyl end of the proenzyme. The post-translation cleavage follows an unusual pathway, termed non-hydrolytic serinolysis, in which the side chain hydroxyl group of the serine supplies its oxygen atom to form the C-terminus of the beta chain, while the remainder of the serine residue undergoes an oxidative deamination to produce ammonia and the pyruvoyl group blocking the N-terminus of the alpha chain.

The enzyme catalyses S-adenosyl-L-methionine + H(+) = S-adenosyl 3-(methylsulfanyl)propylamine + CO2. It functions in the pathway amine and polyamine biosynthesis; S-adenosylmethioninamine biosynthesis; S-adenosylmethioninamine from S-adenosyl-L-methionine: step 1/1. The polypeptide is S-adenosylmethionine decarboxylase proenzyme (SAMDC) (Daucus carota (Wild carrot)).